The sequence spans 876 residues: MSGLTLGGGSGRVRPTQAAAAFPTSHDFADPDRSSVARNANRPSRRFAAPPQLSDDFSLESPTDSAQVHDNLLQDALFPEWKANSPRGVDSPDEMQKKDPLATQIWKLYSRTKAQLPNQERMENLTWRMMALSLRRQERERAQQQARASSQKSPVPGMSGIAQLRLSDRVSNTPTTTADTVSDAMNLDDFIIPFSPSDHPSPSTTKASEATTGAIPIKARRDQSASEATPVPASFPHPAQDQRRESEFGYVPRRVRKTSIDERQFFNLQIPSRKRPAESSPHVPPVSTSMLAHDPDFSHAVPEYTLDTSHGLSLQNQMNAQQLANAQNHTSPNMAFALDTFNLGDDPILPSAGPYQQQFTFSPSESPMTSGNPFANLYAQTPIASSLNSTDFFSPPPSGYQSTASTPQPAYDGEHSKYFDMPVDARSQRRVVPAYITQRSSNLSASLQPRYMYNQGGSSQDITQQNAHMGAQSSSMQSPGFSIPQHVDPTQVLNPNEFNGNHAAMFSFGADSDVEDDDGNQFSAGGLAMPAEFGDDSISDMNSNMAWETSYPNSFQSLPAFAAQHRKHVTIGSADMMDTPSEWNQGGSLGRTHESAASVSEVRNRDQDPRRQKIARTSSTPNTAQLLRQSMQNQSSHTSPNTPPESGLNSAAPSRPASPGGTKNGEQNGPTTCTNCFTQTTPLWRRNPEGQPLCNACGLFLKLHGVVRPLSLKTDVIKKRNRNSANSLAVGSSRVSKKSARKNSVQQVTPTAPTSSRAQSNTTSESPPAMPGSSGRGSGVVPIAAAPPKSSSAATTSPGTNNGCGAVQVAPKRQRRLEKASDVDMAESPSSTSSGGRSKVVPLAPAMPPAAVNPANHSIAAGQGASQEWEWLTMSL.

The segment covering 1–11 (MSGLTLGGGSG) has biased composition (gly residues). Disordered stretches follow at residues 1 to 65 (MSGL…PTDS), 137 to 159 (QERERAQQQARASSQKSPVPGMS), 192 to 248 (IPFS…ESEF), 393 to 413 (FSPPPSGYQSTASTPQPAYDG), 451 to 498 (YMYN…PNEF), and 573 to 672 (SADM…GPTT). Polar residues-rich tracts occupy residues 198-211 (DHPSPSTTKASEAT), 399-408 (GYQSTASTPQ), and 455-480 (QGGSSQDITQQNAHMGAQSSSMQSPG). Basic and acidic residues predominate over residues 602 to 611 (VRNRDQDPRR). Residues 615 to 640 (ARTSSTPNTAQLLRQSMQNQSSHTSP) are compositionally biased toward polar residues. The segment at 673 to 697 (CTNCFTQTTPLWRRNPEGQPLCNAC) adopts a GATA-type zinc-finger fold. The H-T-H motif DNA-binding region spans 721–742 (NRNSANSLAVGSSRVSKKSARK). Polar residues-rich tracts occupy residues 724-734 (SANSLAVGSSR) and 742-766 (KNSVQQVTPTAPTSSRAQSNTTSES). The segment at 724-856 (SANSLAVGSS…MPPAAVNPAN (133 aa)) is disordered. 2 stretches are compositionally biased toward low complexity: residues 782 to 798 (PIAAAPPKSSSAATTSP) and 828 to 855 (SPSSTSSGGRSKVVPLAPAMPPAAVNPA).

As to quaternary structure, interacts with nmrA.

The protein localises to the nucleus. Functionally, transcription activator that binds the consensus DNA element 5'-CGATAG-3' and mediates nitrogen metabolite repression. Activates the transcription of uapA. The chain is Nitrogen regulatory protein areA (areA) from Emericella nidulans (strain FGSC A4 / ATCC 38163 / CBS 112.46 / NRRL 194 / M139) (Aspergillus nidulans).